Consider the following 117-residue polypeptide: Holo-[acyl-carrier-protein] synthase (117 aa).

Positions 6 and 55 each coordinate Mg(2+).

The protein belongs to the P-Pant transferase superfamily. AcpS family. Requires Mg(2+) as cofactor.

Its subcellular location is the cytoplasm. It catalyses the reaction apo-[ACP] + CoA = holo-[ACP] + adenosine 3',5'-bisphosphate + H(+). Functionally, transfers the 4'-phosphopantetheine moiety from coenzyme A to a Ser of acyl-carrier-protein. The polypeptide is Holo-[acyl-carrier-protein] synthase (Chlorobaculum tepidum (strain ATCC 49652 / DSM 12025 / NBRC 103806 / TLS) (Chlorobium tepidum)).